The primary structure comprises 135 residues: Peptide methionine sulfoxide reductase MsrB (135 aa).

Positions 9 to 131 constitute a MsrB domain; that stretch reads DDYWRSKLTD…NSASIQFEEE (123 aa). Zn(2+) is bound by residues C48, C51, C97, and C100. The active-site Nucleophile is the C120.

Belongs to the MsrB Met sulfoxide reductase family. The cofactor is Zn(2+).

The catalysed reaction is L-methionyl-[protein] + [thioredoxin]-disulfide + H2O = L-methionyl-(R)-S-oxide-[protein] + [thioredoxin]-dithiol. This is Peptide methionine sulfoxide reductase MsrB from Teredinibacter turnerae (strain ATCC 39867 / T7901).